Here is a 360-residue protein sequence, read N- to C-terminus: Aminomethyltransferase (360 aa).

It belongs to the GcvT family. The glycine cleavage system is composed of four proteins: P, T, L and H.

It carries out the reaction N(6)-[(R)-S(8)-aminomethyldihydrolipoyl]-L-lysyl-[protein] + (6S)-5,6,7,8-tetrahydrofolate = N(6)-[(R)-dihydrolipoyl]-L-lysyl-[protein] + (6R)-5,10-methylene-5,6,7,8-tetrahydrofolate + NH4(+). Functionally, the glycine cleavage system catalyzes the degradation of glycine. The protein is Aminomethyltransferase of Methylococcus capsulatus (strain ATCC 33009 / NCIMB 11132 / Bath).